The following is a 271-amino-acid chain: MLSIHDPLLIFTDLDGTLLNSHTFEWQPAAPWLTRLHESGVPVILCSSKTAAEMLQLQTTLNLQGLPLIAENGAVIQLDVHWEDHPNYPRLIAGISHNEIRLVLHKLREKEQFKFTTFDDVDDQVISEWTGLNRAQSALTRLHEASVSLIWRDSDERMAQFVARLNDLGLQFVHGARFWHVLDASAGKDQAANWLIEAYRRQWRARPLTLGLGDGPNDAPLLDVMDYAVVVKGLNREGVHLRNDDPQRVYRSQNEGPDGWREGMDYFFSRS.

Asp13 serves as the catalytic Nucleophile. 3 residues coordinate Mg(2+): Asp13, Asp15, and Asp214.

Belongs to the HAD-like hydrolase superfamily. MPGP family. Mg(2+) is required as a cofactor.

The protein localises to the cytoplasm. It carries out the reaction 2-O-(alpha-D-mannosyl)-3-phosphoglycerate + H2O = (2R)-2-O-(alpha-D-mannosyl)-glycerate + phosphate. This chain is Mannosyl-3-phosphoglycerate phosphatase (yedP), found in Salmonella choleraesuis (strain SC-B67).